A 598-amino-acid polypeptide reads, in one-letter code: MTTWLLLVVCLGIACQGITSVTVRENSPRKLANSMNVIHEWKYLDYDFGSDERRQAAMQSGEYDHTKNYPFDVDQWRGMTFVTVPRYKGVPSSLNVISEKIGNGGRLLQPYPDWSWANYKDCSGIVSAYKIAIDKFDRLWILDSGIINNTQPMCSPKLHVFDLNTSHQLKQVVMPHDIAVNASTGNGGLVSLVVQAMDPVNTIVYMADDKGDALIVYQNSDESFHRLTSNTFDYDPKYIKMMDAGESFTAQDGIFGMALSPMTNNLYYSPLSSRSLYYVNTKPFMKSEYGANNVQYQGVQDIFNTESIAKIMSKNGVLFFGLMNNSAIGCWNEHQPLQRENMDMVAQNEETLQTVVAMKMMHLPQSNKMNRMHRMNRVNRVNRMDRMDRIDRMDRMDRMDTMDTMDRIDRMDRMDRIDRIDRMHTMDTMDTMDRTDKMSSMDRMDRMDRVDRMDTMDRTDKMSSMDRMDRMDRVDTMDTMDTMDRMDRMDRMDRMDRMDRMDTMDRTDKMSRIDRMDKIDRMDRMDRTNRMDRMNRMNRQMNEYMMALSMKLQKFINNDYNFNEVNFRILGANVNDLIMNTRCANSDNQNNNQNKHNN.

The signal sequence occupies residues 1–17 (MTTWLLLVVCLGIACQG). N-linked (GlcNAc...) asparagine glycosylation is found at Asn148, Asn164, Asn181, and Asn324.

It belongs to the major royal jelly protein family. In terms of tissue distribution, found in and secreted from the hypopharyngeal glands of the worker honey bee (at protein level); expression peaks at 8 days post eclosion. Expressed in the brains of adult worker bees peaking at 12 days post eclosion (at protein level). Expressed in the spermatheca of adult queen bees (at protein level); Expression levels are higher in mated queens than in virgin queens. Expressed in the heads of worker bees after eclosion, expression dropping with age and detectable up to 26 days of age.

It localises to the secreted. In terms of biological role, component of royal jelly, a substance produced in the hypopharyngeal gland containing proteins, free amino acids, fatty acids, sugars and other nutrients, which is fed to developing larvae by worker nurse bees. Major royal jelly proteins (MRJPs) are high in essential amino acids and probably have a nutritional function in larval food. All larvae are fed some royal jelly (also known as worker jelly) early in their development but it forms the principal source of nutrition for larvae destined to become queen bees. Produced in the spermatheca of adult queen bees, along with other major royal jelly proteins, where it may act as a nutrient supply for sperm stored by mated queens, or be involved in energy metabolism. This Apis mellifera (Honeybee) protein is Major royal jelly protein 5.